A 315-amino-acid chain; its full sequence is Replication factor C small subunit (315 aa).

43–50 is an ATP binding site; sequence GSPGVGKT.

It belongs to the activator 1 small subunits family. RfcS subfamily. As to quaternary structure, heteromultimer composed of small subunits (RfcS) and large subunits (RfcL).

Its function is as follows. Part of the RFC clamp loader complex which loads the PCNA sliding clamp onto DNA. The chain is Replication factor C small subunit from Methanococcus maripaludis (strain C5 / ATCC BAA-1333).